The following is a 451-amino-acid chain: Trigger factor (451 aa).

The region spanning 170-256 (DHIATIDYCE…LTALKYKDLP (87 aa)) is the PPIase FKBP-type domain.

This sequence belongs to the FKBP-type PPIase family. Tig subfamily.

The protein localises to the cytoplasm. The catalysed reaction is [protein]-peptidylproline (omega=180) = [protein]-peptidylproline (omega=0). Involved in protein export. Acts as a chaperone by maintaining the newly synthesized protein in an open conformation. Functions as a peptidyl-prolyl cis-trans isomerase. The chain is Trigger factor from Treponema denticola (strain ATCC 35405 / DSM 14222 / CIP 103919 / JCM 8153 / KCTC 15104).